Reading from the N-terminus, the 404-residue chain is Ubiquitin-like modifier-activating enzyme 5 (404 aa).

The ATP site is built by Gly83, Asp104, Lys127, Asn150, and Asn184. Zn(2+) is bound by residues Cys226 and Cys229. The active-site Glycyl thioester intermediate is Cys250. Positions 303 and 308 each coordinate Zn(2+). The disordered stretch occupies residues 372-393 (APEKSSETSEETVTAATADETS). Residues 382 to 391 (ETVTAATADE) are compositionally biased toward low complexity.

Belongs to the ubiquitin-activating E1 family. UBA5 subfamily.

In terms of biological role, E1-like enzyme which activates UFM1. The polypeptide is Ubiquitin-like modifier-activating enzyme 5 (Drosophila sechellia (Fruit fly)).